Here is a 317-residue protein sequence, read N- to C-terminus: MPMHGAQRKLLGSLNSTPTATSNLGLAANHTGAPCLEVSIPDGLFLSLGLVSLVENVLVVAAIAKNRNLHSSMYCFICCLALSDLLVSGSNMLETAVILLLEAGALATRTSAMQQLHNTIDVLTCSSMLCSLCFLGAIAVDRYISIFYALRYHSIMTLPRAQRAIAAIWVASXLSSTLFITYYDHAAVLLCLVVFFLAMLVLMAVLYVHMLARACQHAHGIIRLHKRQTPAHQGFGLRGAATLTILLGIFFLCWGPFFLHLTLVVFCPQHLTCSCIFKNFKVFLTLIICNTIIDPLIYAFRSQELRRTLKEVLLCSW.

The Extracellular portion of the chain corresponds to 1-37 (MPMHGAQRKLLGSLNSTPTATSNLGLAANHTGAPCLE). N-linked (GlcNAc...) asparagine glycosylation is present at asparagine 29. Residues 38-63 (VSIPDGLFLSLGLVSLVENVLVVAAI) form a helical membrane-spanning segment. Residues 64–72 (AKNRNLHSS) lie on the Cytoplasmic side of the membrane. Residues 73 to 93 (MYCFICCLALSDLLVSGSNML) form a helical membrane-spanning segment. The Extracellular portion of the chain corresponds to 94–118 (ETAVILLLEAGALATRTSAMQQLHN). The helical transmembrane segment at 119 to 140 (TIDVLTCSSMLCSLCFLGAIAV) threads the bilayer. Over 141-163 (DRYISIFYALRYHSIMTLPRAQR) the chain is Cytoplasmic. Residues 164–183 (AIAAIWVASXLSSTLFITYY) traverse the membrane as a helical segment. At 184–191 (DHAAVLLC) the chain is on the extracellular side. The chain crosses the membrane as a helical span at residues 192–211 (LVVFFLAMLVLMAVLYVHML). The Cytoplasmic segment spans residues 212–240 (ARACQHAHGIIRLHKRQTPAHQGFGLRGA). Residues 241–266 (ATLTILLGIFFLCWGPFFLHLTLVVF) form a helical membrane-spanning segment. The Extracellular segment spans residues 267 to 279 (CPQHLTCSCIFKN). Residues 280 to 300 (FKVFLTLIICNTIIDPLIYAF) form a helical membrane-spanning segment. At 301–317 (RSQELRRTLKEVLLCSW) the chain is on the cytoplasmic side. Cysteine 315 carries the S-palmitoyl cysteine lipid modification.

This sequence belongs to the G-protein coupled receptor 1 family. In terms of assembly, interacts with MGRN1, but does not undergo MGRN1-mediated ubiquitination; this interaction competes with GNAS-binding and thus inhibits agonist-induced cAMP production. Interacts with OPN3; the interaction results in a decrease in MC1R-mediated cAMP signaling and ultimately a decrease in melanin production in melanocytes.

Its subcellular location is the cell membrane. Functionally, receptor for MSH (alpha, beta and gamma) and ACTH. The activity of this receptor is mediated by G proteins which activate adenylate cyclase. Mediates melanogenesis, the production of eumelanin (black/brown) and phaeomelanin (red/yellow), via regulation of cAMP signaling in melanocytes. The protein is Melanocyte-stimulating hormone receptor (MC1R) of Saguinus midas (Golden-handed tamarin).